Here is a 303-residue protein sequence, read N- to C-terminus: Glycine--tRNA ligase alpha subunit (303 aa).

Belongs to the class-II aminoacyl-tRNA synthetase family. In terms of assembly, tetramer of two alpha and two beta subunits.

The protein localises to the cytoplasm. The enzyme catalyses tRNA(Gly) + glycine + ATP = glycyl-tRNA(Gly) + AMP + diphosphate. The polypeptide is Glycine--tRNA ligase alpha subunit (Klebsiella pneumoniae subsp. pneumoniae (strain ATCC 700721 / MGH 78578)).